Consider the following 628-residue polypeptide: Putative pentatricopeptide repeat-containing protein At3g13770, mitochondrial (628 aa).

Residues 1–19 constitute a mitochondrion transit peptide; it reads MFNLMRLIHRSFSSSPTNY. PPR repeat units lie at residues 51–85, 86–116, 117–151, 152–186, 187–217, 218–252, 253–287, 288–318, 319–353, 355–389, and 392–422; these read GFHG…RYLP, ATYL…MPEK, NVVS…DGKP, NEFT…NYDS, HIFV…LPER, DVVS…GMSP, NYVT…ELPF, YAVL…MPER, TAIS…KRVK, DAVT…EYGT, and GTEH…MPSK. Residues 427–502 form a type E motif region; it reads VLGSLLGACR…EPGRSWIQHE (76 aa). Positions 503–533 are type E(+) motif; sequence QTLHYFHANDRTHPRREEVLAKMKEISIKMK. Residues 534–628 are type DYW motif; it reads QAGYVPDLSC…DGICSCGDYW (95 aa).

This sequence belongs to the PPR family. PCMP-H subfamily.

It localises to the mitochondrion. This Arabidopsis thaliana (Mouse-ear cress) protein is Putative pentatricopeptide repeat-containing protein At3g13770, mitochondrial (PCMP-H85).